Consider the following 217-residue polypeptide: uncharacterized protein (217 aa).

Transmembrane regions (helical) follow at residues 9-29 (ISLA…LSTI), 54-74 (FLST…LLEL), 103-125 (LMAY…RFLS), and 135-157 (IVFW…ASYI).

The protein belongs to the DP1 family.

Its subcellular location is the endoplasmic reticulum membrane. This is an uncharacterized protein from Schizosaccharomyces pombe (strain 972 / ATCC 24843) (Fission yeast).